The following is a 257-amino-acid chain: 3-methyl-2-oxobutanoate hydroxymethyltransferase (257 aa).

Aspartate 42 and aspartate 86 together coordinate Mg(2+). 3-methyl-2-oxobutanoate-binding positions include 42–43, aspartate 86, and lysine 116; that span reads DS. Glutamate 118 provides a ligand contact to Mg(2+). The active-site Proton acceptor is glutamate 185.

This sequence belongs to the PanB family. Homodecamer; pentamer of dimers. The cofactor is Mg(2+).

The protein localises to the cytoplasm. It catalyses the reaction 3-methyl-2-oxobutanoate + (6R)-5,10-methylene-5,6,7,8-tetrahydrofolate + H2O = 2-dehydropantoate + (6S)-5,6,7,8-tetrahydrofolate. Its pathway is cofactor biosynthesis; (R)-pantothenate biosynthesis; (R)-pantoate from 3-methyl-2-oxobutanoate: step 1/2. Catalyzes the reversible reaction in which hydroxymethyl group from 5,10-methylenetetrahydrofolate is transferred onto alpha-ketoisovalerate to form ketopantoate. The chain is 3-methyl-2-oxobutanoate hydroxymethyltransferase from Prochlorococcus marinus (strain MIT 9515).